We begin with the raw amino-acid sequence, 476 residues long: Doublesex- and mab-3-related transcription factor 3 (476 aa).

The segment at residues 29–76 is a DNA-binding region (DM); it reads CARCRNHGVLSWLKGHKRYCRFKDCTCEKCILIIERQRVMAAQVALRR. 2 disordered regions span residues 89–130 and 147–195; these read DSLR…RPTA and GTLP…SKNC. The segment covering 102-121 has biased composition (low complexity); that stretch reads DAAATAATASQSSPASQASQ. A compositionally biased stretch (polar residues) spans 165 to 174; the sequence is DSSSTDNTAE. The segment covering 176-185 has biased composition (basic and acidic residues); it reads FSDKDTDQRS. Residues 255–290 form the DMA domain; the sequence is RPPLEVLKKIFPNQKPTVLELILKGCGGDLVSAVEV. Residues 418–432 show a composition bias toward polar residues; sequence NSTSVFRSSPVLSSR. The disordered stretch occupies residues 418 to 476; that stretch reads NSTSVFRSSPVLSSRTTEDPRISIPDDGCPIVTKQSIYTEDDYDERSDSSDSRILNTSS.

It belongs to the DMRT family. As to expression, expressed in the ventral spinal cord, in a restrical population of neurons migrating ventrically in the developing spinal cord at 11.5 dpc.

It is found in the nucleus. Functionally, probable transcription factor that plays a role in configuring the spinal circuits controlling stride in vertebrates. Involved in neuronal specification within specific subdivision of spinal cord neurons and in the development of a coordinated locomotor network controlling limb movements. May regulate transcription during sexual development. The polypeptide is Doublesex- and mab-3-related transcription factor 3 (Dmrt3) (Mus musculus (Mouse)).